Here is a 175-residue protein sequence, read N- to C-terminus: MSAATKKRYITNKVGSEFYELVDEDIIAQVRQSRGNNLHEVLDQNGDSYVVSMPTKFRKSVWLRRDQFVVVRPITEGDKVKGEIEYILDQDNVLYIRELGKWPTCFEENALKMTREAKRGQTSDKMIDDDMLPPSESEEEDESEGEETYDEDDVDDEEEEEFDTYNPNRMQAPSK.

An S1-like domain is found at 5–89 (TKKRYITNKV…VKGEIEYILD (85 aa)). The span at 116–128 (EAKRGQTSDKMID) shows a compositional bias: basic and acidic residues. The disordered stretch occupies residues 116-175 (EAKRGQTSDKMIDDDMLPPSESEEEDESEGEETYDEDDVDDEEEEEFDTYNPNRMQAPSK). Over residues 129–163 (DDMLPPSESEEEDESEGEETYDEDDVDDEEEEEFD) the composition is skewed to acidic residues. Polar residues predominate over residues 165 to 175 (YNPNRMQAPSK).

This sequence belongs to the EIF1AD family.

This chain is Probable RNA-binding protein EIF1AD, found in Caenorhabditis elegans.